Reading from the N-terminus, the 92-residue chain is Precursor of elicitor peptide 1 (92 aa).

Residues 1 to 69 constitute a propeptide that is removed on maturation; it reads MEKSDRRSEE…EKEEVVVTSR (69 aa). Positions 35-92 are disordered; that stretch reads HQDSPTTSSPGTSKQPKEEKEDVTMEKEEVVVTSRATKVKAKQRGKEKVSSGRPGQHN. Over residues 37–48 the composition is skewed to polar residues; that stretch reads DSPTTSSPGTSK. The segment covering 49-64 has biased composition (basic and acidic residues); that stretch reads QPKEEKEDVTMEKEEV.

It belongs to the brassicaceae elicitor peptide family. In terms of assembly, interacts with its receptor PEPR1.

Elicitor of plant defense. Induces the production of plant defensin (PDF1.2) and of H(2)O(2). Promotes resistance to the root fungal pathogen P.irregulare. Triggers the expression of several PROSCOOP genes (e.g. PROSCOOP2, PROSCOOP7, PROSCOOP8, PROSCOOP12 and PROSCOOP13). The protein is Precursor of elicitor peptide 1 of Arabidopsis thaliana (Mouse-ear cress).